Consider the following 706-residue polypeptide: Signal transducer and activator of transcription 1 (706 aa).

The 98-residue stretch at 477–574 (WCIGFISKND…EEMLRFFESE (98 aa)) folds into the SH2 domain.

It belongs to the transcription factor STAT family. In terms of assembly, forms a homodimer or a heterodimer with a related family member. Expressed in adult and larval pharynx, head ganglia, tail ganglia, ventral nerve cord and body muscles.

Its subcellular location is the cytoplasm. The protein resides in the nucleus. Functionally, carries out a dual function: signal transduction and activation of transcription. Activated STAT proteins play a role in repression of dauer formation. Neuronal expression is held in check by negative signals through the TGF-beta pathway that target the daf-3 transcription factor. In Caenorhabditis elegans, this protein is Signal transducer and activator of transcription 1.